A 1038-amino-acid polypeptide reads, in one-letter code: DNA polymerase delta catalytic subunit (1038 aa).

The disordered stretch occupies residues 1–29 (MSHSIPITSSPPPALKKLKLPNGSEEPSE). 4 residues coordinate Zn(2+): cysteine 942, cysteine 945, cysteine 958, and cysteine 961. The CysA-type zinc-finger motif lies at 942-961 (CVSCRTPLKKDNLGALCPNC). Residues cysteine 992, cysteine 995, cysteine 1005, and cysteine 1010 each contribute to the [4Fe-4S] cluster site. The CysB motif motif lies at 992–1010 (CQRCQGSLHQEVLCSNKDC).

The protein belongs to the DNA polymerase type-B family. Heterodimer with subunits of 125 kDa and 50 kDa. The 125 kDa subunit contains the polymerase active site and most likely the active site for the 3'-5' exonuclease activity. [4Fe-4S] cluster is required as a cofactor.

The protein resides in the nucleus. It catalyses the reaction DNA(n) + a 2'-deoxyribonucleoside 5'-triphosphate = DNA(n+1) + diphosphate. In terms of biological role, this polymerase possesses two enzymatic activities: DNA synthesis (polymerase) and an exonucleolytic activity that degrades single-stranded DNA in the 3'- to 5'-direction. The protein is DNA polymerase delta catalytic subunit (POL3) of Candida albicans (Yeast).